Here is a 339-residue protein sequence, read N- to C-terminus: MKFSRQLVLGSLAVLVLSACSSSPTQRRQAKDDFDYLETTEFKPWVLPQGATPQFYPNYDIPQGAFHGGVGNVVDIRPPQQVLELIPGARAERQNGEVTLWMLRQDEAQKVWDTALKMIAERKIPLRKQTDSMVETDWVDWVSEDEDVTIGSRYLMSMVETNNRYGFKISLIGWRENGQVQTVSTTNKERYNAFMTNLVTTRYDSDVRAEAARRAQELVKQIPITMGSDRSGFPVIIARTPYDVLWQRLPELLPKMGFTIEERNQSQGTVKAKYAAPDDEFWQQVGVKPIELKSGTYTFLFGDLGNRTSINVTDSAGKPVNEALLKEMVPVLSAVVDKK.

Residues 1–19 (MKFSRQLVLGSLAVLVLSA) form the signal peptide. The N-palmitoyl cysteine moiety is linked to residue Cys-20. Cys-20 carries the S-diacylglycerol cysteine lipid modification.

It belongs to the BamC family. In terms of assembly, part of the Bam complex.

It localises to the cell outer membrane. In terms of biological role, part of the outer membrane protein assembly complex, which is involved in assembly and insertion of beta-barrel proteins into the outer membrane. The protein is Outer membrane protein assembly factor BamC of Vibrio cholerae serotype O1 (strain ATCC 39315 / El Tor Inaba N16961).